A 173-amino-acid chain; its full sequence is C-phycocyanin-3 beta subunit (173 aa).

Position 73 is an N4-methylasparagine (Asn-73). 2 residues coordinate (2R,3E)-phycocyanobilin: Cys-83 and Cys-154.

This sequence belongs to the phycobiliprotein family. As to quaternary structure, heterodimer of an alpha and a beta subunit, which further assembles into trimers and the trimers into hexamers. Post-translationally, contains two covalently linked bilin chromophores.

It is found in the cellular thylakoid membrane. Functionally, light-harvesting photosynthetic bile pigment-protein from the phycobiliprotein complex (phycobilisome, PBS). Phycocyanin is the major phycobiliprotein in the PBS rod. This Microchaete diplosiphon (Fremyella diplosiphon) protein is C-phycocyanin-3 beta subunit (cpcB3).